The primary structure comprises 337 residues: Large ribosomal subunit protein uL10 (337 aa).

The interval 309 to 337 (EEVVEEQEEVKEEEEEESDMASGLGALFG) is disordered. Positions 310 to 327 (EVVEEQEEVKEEEEEESD) are enriched in acidic residues.

This sequence belongs to the universal ribosomal protein uL10 family. In terms of assembly, part of the 50S ribosomal subunit. Forms part of the ribosomal stalk which helps the ribosome interact with GTP-bound translation factors. Forms a heptameric L10(L12)2(L12)2(L12)2 complex, where L10 forms an elongated spine to which the L12 dimers bind in a sequential fashion.

Its function is as follows. Forms part of the ribosomal stalk, playing a central role in the interaction of the ribosome with GTP-bound translation factors. This is Large ribosomal subunit protein uL10 from Methanococcoides burtonii (strain DSM 6242 / NBRC 107633 / OCM 468 / ACE-M).